Reading from the N-terminus, the 514-residue chain is LWamide neuropeptides (514 aa).

Positions 1–22 are cleaved as a signal peptide; sequence MALKCHLVLLAITLLLAQCSGS. Residues 23-53 show a composition bias toward basic and acidic residues; the sequence is VDKKDSTTNHLDEKKTDSTEAHIVQETDALK. A propeptide spanning residues 23–75 is cleaved from the precursor; the sequence is VDKKDSTTNHLDEKKTDSTEAHIVQETDALKENSYLGAEEESKEEDKKRSAAP. Residues 23–180 form a disordered region; the sequence is VDKKDSTTNH…PGLWGRSADA (158 aa). Tryptophan amide occurs at positions 81 and 90. The propeptide occupies 93–97; that stretch reads SADAG. A tryptophan amide mark is found at Trp-102 and Trp-111. A propeptide spanning residues 114–118 is cleaved from the precursor; the sequence is SADAG. Residues Trp-123 and Trp-132 each carry the tryptophan amide modification. A propeptide spanning residues 135 to 139 is cleaved from the precursor; sequence SADAG. Tryptophan amide occurs at positions 144 and 153. Residues 156–160 constitute a propeptide that is removed on maturation; that stretch reads SADAG. Tryptophan amide is present on residues Trp-165 and Trp-174. The propeptide occupies 177–181; sequence SADAR. Trp-186 bears the Tryptophan amide mark. The propeptide occupies 190–199; sequence EIYALWGGKR. Trp-205 is modified (tryptophan amide). A propeptide spanning residues 208–212 is cleaved from the precursor; that stretch reads SADPG. Position 217 is a tryptophan amide (Trp-217). A propeptide spanning residues 221-230 is cleaved from the precursor; the sequence is ELVGLWGGKR. Residue Trp-236 is modified to Tryptophan amide. Residues 239–243 constitute a propeptide that is removed on maturation; it reads SAEAG. Tryptophan amide is present on residues Trp-248 and Trp-257. Residues 258–475 are disordered; it reads GRSADPLQPG…GRSAGSGQLG (218 aa). A propeptide spanning residues 260–264 is cleaved from the precursor; sequence SADPL. Tryptophan amide is present on residues Trp-269 and Trp-278. A propeptide spanning residues 281–284 is cleaved from the precursor; it reads SADP. Tryptophan amide occurs at positions 290 and 299. Positions 302–305 are excised as a propeptide; it reads SADP. Residues Trp-311 and Trp-320 each carry the tryptophan amide modification. The propeptide occupies 323 to 326; the sequence is SADP. Residues Trp-332 and Trp-341 each carry the tryptophan amide modification. The propeptide occupies 344–347; sequence SADP. Tryptophan amide is present on Trp-353. A propeptide spanning residues 356 to 366 is cleaved from the precursor; that stretch reads SPGLWGRSADP. Trp-372 carries the post-translational modification Tryptophan amide. A propeptide spanning residues 376-387 is cleaved from the precursor; sequence QNPGFWGRSADP. 2 positions are modified to tryptophan amide: Trp-393 and Trp-402. A propeptide spanning residues 405–408 is cleaved from the precursor; sequence SADP. 2 positions are modified to tryptophan amide: Trp-414 and Trp-423. A propeptide spanning residues 426 to 429 is cleaved from the precursor; the sequence is SADP. Tryptophan amide is present on residues Trp-435 and Trp-444. The propeptide occupies 447 to 450; the sequence is SADP. A tryptophan amide mark is found at Trp-456 and Trp-465. The propeptide occupies 468–472; it reads SAGSG. Trp-477 and Trp-487 each carry tryptophan amide. The interval 489–514 is disordered; that stretch reads RSAEPPQFEDLEDLKKKSAIPQPKGQ. The propeptide occupies 490–514; that stretch reads SAEPPQFEDLEDLKKKSAIPQPKGQ.

It belongs to the LWamide neuropeptide family.

Its subcellular location is the secreted. Metamorphosin A may be part of an internal signaling system involved in control of metamorphosis. This chain is LWamide neuropeptides, found in Anthopleura elegantissima (Green aggregating anemone).